Reading from the N-terminus, the 153-residue chain is UPF0251 protein CT0950 (153 aa).

Belongs to the UPF0251 family.

The protein is UPF0251 protein CT0950 of Chlorobaculum tepidum (strain ATCC 49652 / DSM 12025 / NBRC 103806 / TLS) (Chlorobium tepidum).